Consider the following 603-residue polypeptide: UvrABC system protein C (603 aa).

The GIY-YIG domain occupies Ser13–Val92. The region spanning Glu205–Ala240 is the UVR domain.

The protein belongs to the UvrC family. In terms of assembly, interacts with UvrB in an incision complex.

It is found in the cytoplasm. The UvrABC repair system catalyzes the recognition and processing of DNA lesions. UvrC both incises the 5' and 3' sides of the lesion. The N-terminal half is responsible for the 3' incision and the C-terminal half is responsible for the 5' incision. This chain is UvrABC system protein C, found in Chlamydia pneumoniae (Chlamydophila pneumoniae).